The primary structure comprises 154 residues: MSTSLAVLRLDRELPMPARAHDGDAGVDLFSARDVELAPGQRELVPTGIAVAIPHGMVGLVHPRSGLAARVGLSIVNSPGTIDAGYRGEIKVSLINLDPHAPIVIRRGDRIAQLLVQRVELPELVEVTSFDEAGLAETTRGEGGHGSSGGHASL.

Substrate is bound by residues 64-66, N77, 81-83, and K91; these read RSG and TID.

It belongs to the dUTPase family. Homotrimer. Mg(2+) serves as cofactor.

The catalysed reaction is dUTP + H2O = dUMP + diphosphate + H(+). The protein operates within pyrimidine metabolism; dUMP biosynthesis; dUMP from dCTP (dUTP route): step 2/2. Functionally, this enzyme is involved in nucleotide metabolism: it produces dUMP, the immediate precursor of thymidine nucleotides and it decreases the intracellular concentration of dUTP so that uracil cannot be incorporated into DNA. In Mycobacterium sp. (strain JLS), this protein is Deoxyuridine 5'-triphosphate nucleotidohydrolase.